Here is a 462-residue protein sequence, read N- to C-terminus: BBSome complex member bbs-4 (462 aa).

The segment at 1 to 46 (MEASNQDEIIGTDVIPNEQDNPEEVVPEPTSLDVPPPPPERAPSAP) is disordered. TPR repeat units follow at residues 89–122 (EAAFHVRGLIARNEGELEEAMECFHKAYELSGKN), 124–156 (RYFYETGRCNFLLGRHQIAVEQLTKASEVMKDN), 199–232 (ATLICFLGRLCEELGDTSGAIAAYKSSLKLQPDN), 234–266 (EVMNLLGLIYLRTGQVQEGFVQLGNCLAYDPAN), 268–300 (QAILTIGSIMQNHSDHDVALNKYRVAADVSDYN), 335–368 (YKISYNLGVLHDIMNLHCSALHYIKLCTELYPQN), and 369–402 (AKAVGAMAVILSHMNDDKNARLAYKKSIELKKNP).

This sequence belongs to the BBS4 family. As to quaternary structure, part of BBSome complex, that contains at least bbs-1, bbs-2, bbs-4, bbs-5, osm-12, bbs-8/ttc-8 and bbs-9. Interacts (via C-terminus) with bbs-5; the interaction is direct.

It is found in the cytoplasm. Its subcellular location is the cytoskeleton. It localises to the microtubule organizing center. The protein localises to the centrosome. The protein resides in the cell projection. It is found in the cilium membrane. In terms of biological role, component of the BBSome complex. The BBSome complex is thought to function as a coat complex required for sorting of specific membrane proteins to the primary cilia. The BBSome complex is required for ciliogenesis but is dispensable for centriolar satellite function. Required for proper BBSome complex assembly and its ciliary localization. May be required for microtubule anchoring at the centrosome but not for microtubule nucleation. May be required for the dynein-mediated transport of pericentriolar proteins to the centrosome. Required, redundantly with bbs-5, for cilia biogenesis and both the assembly and movement of intraflagellar transport proteins along the ciliary axoneme. Plays a role in the removal of degraded mechanosensory receptors within the cilia. This is BBSome complex member bbs-4 from Caenorhabditis elegans.